Here is a 244-residue protein sequence, read N- to C-terminus: Small ribosomal subunit protein eS4 (244 aa).

The S4 RNA-binding domain maps to 43-106 (LPLLLVVRDI…DENYLVLFDE (64 aa)).

It belongs to the eukaryotic ribosomal protein eS4 family.

This chain is Small ribosomal subunit protein eS4, found in Methanococcus maripaludis (strain C6 / ATCC BAA-1332).